The sequence spans 146 residues: Hemoglobin subunit beta (146 aa).

Position 1 is an N-acetylvaline (Val1). One can recognise a Globin domain in the interval 2 to 146; that stretch reads HLTGEEKSAV…VANALAHKYH (145 aa). Phosphothreonine is present on Thr12. Phosphoserine is present on Ser44. Residue Lys59 is modified to N6-acetyllysine. His63 contributes to the heme b binding site. Lys82 is subject to N6-acetyllysine. His92 lines the heme b pocket. The residue at position 93 (Cys93) is an S-nitrosocysteine. Lys144 bears the N6-acetyllysine mark.

Belongs to the globin family. As to quaternary structure, heterotetramer of two alpha chains and two beta chains. In terms of tissue distribution, red blood cells.

Its function is as follows. Involved in oxygen transport from the lung to the various peripheral tissues. This chain is Hemoglobin subunit beta (HBB), found in Saguinus oedipus (Cotton-top tamarin).